Reading from the N-terminus, the 348-residue chain is GTPase Obg (348 aa).

The Obg domain maps to 1–159; it reads MKFLDQARIY…MTLWLRLKLI (159 aa). The OBG-type G domain maps to 160–327; sequence ADAGLVGLPN…TLQSLLAAID (168 aa). Residues 166-173, 191-195, 212-215, 279-282, and 308-310 each bind GTP; these read GLPNAGKS, FTTLH, DIPG, SKID, and SAA. 2 residues coordinate Mg(2+): S173 and T193.

The protein belongs to the TRAFAC class OBG-HflX-like GTPase superfamily. OBG GTPase family. Monomer. It depends on Mg(2+) as a cofactor.

The protein resides in the cytoplasm. In terms of biological role, an essential GTPase which binds GTP, GDP and possibly (p)ppGpp with moderate affinity, with high nucleotide exchange rates and a fairly low GTP hydrolysis rate. Plays a role in control of the cell cycle, stress response, ribosome biogenesis and in those bacteria that undergo differentiation, in morphogenesis control. The chain is GTPase Obg from Beijerinckia indica subsp. indica (strain ATCC 9039 / DSM 1715 / NCIMB 8712).